The chain runs to 860 residues: MTIVVFATEYDAANVIFSILCRSPSEHLIFPIIVKYKPSNNVSFCLQTQKCKNSKRIDTVFVCHAEKLNLSHYIQTASPIKAEDVANSLNDKETELLYVDMILSQTGKEKEDVEFKYMAYFHKSLIIKYLTGKFLLPTSPFWFLSTYGQTEGLLLLTMYYYLFEEQKSTITTTKNYVQCFTENTGSMVFTYSSMSEFINITLKSKFRKLFADFATYARQKNLRDKEEFKYLDTQINLFRKSSHLTNTFRVHYIYIAYNTALETTKFVNYCNITSYDSNLPIGQQCQRNVHILGNSLHENLLCIMKQYFNADCYFKTYIDIKRLKNPDLNVTEYEYALASKKKTIQALTSEQITRAIAKCNKNGEGLFSPVKPGLQGLLEISASDKYVQIQDKRIYRRQHLHKDYHRPFPVFRVQLLHKNIFCFGNSEDWYENMGFNRILQYLPDEYISDEALTRAIWLQDTHFLCDDFEKQFYTTRHEIFNERIPVTNYIGDLDLPLQDTATITEETFFSMCRLIRLTLINAWKKIFPSIDTHTHPIFFFKTQCDTTNDALDYTEDPTEIKQFCICRKKIGLRISIPLPNGTAIAGGEPLKQLSKILNHVMCLDQELSQILNSLTFPGECFDIGIYHTGHCIRIGYMYKTDMDKGKMLHGRLTPIFIVPEGYRNSCKTFIQMQMDLNNLLHHGTKKAPIEELIYSITDKGCPKENLSFMDLKSRQLWNKVNIATDTLITKYLNTHGFNNNATSADDSLLSFIRLIGWPIIKTQLITHYETRIAQQFSQVTFLKIDSKNLQIKKTQFGRVSDFSCLNRQHRGNRDNVLVYIQLKADGNRLILILWSTCFATKCQSNSKQVHCSIALEQLKN.

The CHC2-type zinc finger occupies 804–842; that stretch reads CLNRQHRGNRDNVLVYIQLKADGNRLILILWSTCFATKC.

Belongs to the herpesviridae DNA primase family. Associates with the helicase and the primase-associated factor to form the helicase-primase factor.

The protein localises to the host nucleus. Essential component of the helicase/primase complex. Unwinds the DNA at the replication forks and generates single-stranded DNA for both leading and lagging strand synthesis. The primase initiates primer synthesis and thereby produces large amount of short RNA primers on the lagging strand that the polymerase elongates using dNTPs. This Homo sapiens (Human) protein is DNA primase (U43).